A 197-amino-acid polypeptide reads, in one-letter code: Phosphoheptose isomerase (197 aa).

Positions 36–197 (MVNALLNEGK…IDSQLFGSEE (162 aa)) constitute an SIS domain. 51-53 (NGG) contributes to the substrate binding site. His-60 and Glu-64 together coordinate Zn(2+). Residues Glu-64, 93 to 94 (ND), 119 to 121 (STS), Ser-124, and Gln-174 each bind substrate. The Zn(2+) site is built by Gln-174 and His-182.

The protein belongs to the SIS family. GmhA subfamily. In terms of assembly, homotetramer. The cofactor is Zn(2+).

Its subcellular location is the cytoplasm. It catalyses the reaction 2 D-sedoheptulose 7-phosphate = D-glycero-alpha-D-manno-heptose 7-phosphate + D-glycero-beta-D-manno-heptose 7-phosphate. Its pathway is carbohydrate biosynthesis; D-glycero-D-manno-heptose 7-phosphate biosynthesis; D-glycero-alpha-D-manno-heptose 7-phosphate and D-glycero-beta-D-manno-heptose 7-phosphate from sedoheptulose 7-phosphate: step 1/1. Catalyzes the isomerization of sedoheptulose 7-phosphate in D-glycero-D-manno-heptose 7-phosphate. The polypeptide is Phosphoheptose isomerase (Pseudomonas putida (strain GB-1)).